Here is a 105-residue protein sequence, read N- to C-terminus: U-scoloptoxin(16)-Sm4a (105 aa).

The first 22 residues, 1–22 (MWALTVFVTILAAAIPITGVTG), serve as a signal peptide directing secretion.

It belongs to the scoloptoxin-16 family. Contains 4 disulfide bonds. As to expression, expressed by the venom gland.

Its subcellular location is the secreted. The sequence is that of U-scoloptoxin(16)-Sm4a from Scolopendra morsitans (Tanzanian blue ringleg centipede).